A 337-amino-acid polypeptide reads, in one-letter code: Pyruvate dehydrogenase E1 component subunit beta (337 aa).

Glu73 is a thiamine diphosphate binding site.

As to quaternary structure, heterodimer of an alpha and a beta chain. The cofactor is thiamine diphosphate.

The catalysed reaction is N(6)-[(R)-lipoyl]-L-lysyl-[protein] + pyruvate + H(+) = N(6)-[(R)-S(8)-acetyldihydrolipoyl]-L-lysyl-[protein] + CO2. In terms of biological role, the pyruvate dehydrogenase complex catalyzes the overall conversion of pyruvate to acetyl-CoA and CO(2). It contains multiple copies of three enzymatic components: pyruvate dehydrogenase (E1), dihydrolipoamide acetyltransferase (E2) and lipoamide dehydrogenase (E3). This Leifsonia xyli subsp. xyli (strain CTCB07) protein is Pyruvate dehydrogenase E1 component subunit beta (pdhB).